A 140-amino-acid chain; its full sequence is Transcriptional regulator YdaT (140 aa).

Transcriptional regulator that causes a severe detrimental growth effect and reduces cell viability. When expressed, it alters expression of a variety of bacterial regulons normally controlled by the transcriptional regulatory protein RcsA, resulting in deficient lipopolysaccharide biosynthesis and cell division. YdaT has no effect on Rac prophage excision. Overexpression of ydaST reduces growth and leads to loss of cell viability. May contribute to toxicity and morphological defects. The chain is Transcriptional regulator YdaT (ydaT) from Escherichia coli (strain K12).